The primary structure comprises 192 residues: Inosine triphosphate pyrophosphatase (192 aa).

Position 10-15 (10-15) interacts with ITP; the sequence is TGNANK. Glu43 provides a ligand contact to Mg(2+). Residues Lys56, 74–75, Lys91, 149–152, Lys173, and 178–179 each bind ITP; these read DT, FGWD, and HR.

Belongs to the HAM1 NTPase family. As to quaternary structure, homodimer. It depends on Mg(2+) as a cofactor. Mn(2+) serves as cofactor.

Its subcellular location is the cytoplasm. The protein localises to the nucleus. The catalysed reaction is ITP + H2O = IMP + diphosphate + H(+). It catalyses the reaction dITP + H2O = dIMP + diphosphate + H(+). The enzyme catalyses XTP + H2O = XMP + diphosphate + H(+). Functionally, pyrophosphatase that hydrolyzes non-canonical purine nucleotides such as inosine triphosphate (ITP), deoxyinosine triphosphate (dITP) or xanthosine 5'-triphosphate (XTP) to their respective monophosphate derivatives. The enzyme does not distinguish between the deoxy- and ribose forms. Probably excludes non-canonical purines from RNA and DNA precursor pools, thus preventing their incorporation into RNA and DNA and avoiding chromosomal lesions. The protein is Inosine triphosphate pyrophosphatase of Candida glabrata (strain ATCC 2001 / BCRC 20586 / JCM 3761 / NBRC 0622 / NRRL Y-65 / CBS 138) (Yeast).